The chain runs to 362 residues: Glucuronokinase 1 (362 aa).

126–136 (PRQTGLSGSSA) contributes to the ATP binding site. The Proton acceptor role is filled by aspartate 179.

Belongs to the GHMP kinase family. Mg(2+) is required as a cofactor. Requires Mn(2+) as cofactor. Co(2+) serves as cofactor. In terms of tissue distribution, highly expressed in pollen. Detected in seedlings, inflorescences, seeds, leaves and roots.

It catalyses the reaction D-glucuronate + ATP = 1-phospho-alpha-D-glucuronate + ADP + H(+). In terms of biological role, sugar-1-kinase with a strict substrate specificity for D-glucuronic acid and ATP. Involved in the biosynthesis of UDP-glucuronic acid (UDP-GlcA), providing nucleotide sugars for cell-wall polymers. May be also involved in a salvage pathway for glucuronic acid. In Arabidopsis thaliana (Mouse-ear cress), this protein is Glucuronokinase 1 (GLCAK1).